The sequence spans 236 residues: uncharacterized protein (236 aa).

The segment at 186 to 236 is disordered; it reads HGRGDTRNLNDITGLGHERERDRENTHYEKKPKLDSDSEVDIRSFRQDMDL. Residues 201–236 are compositionally biased toward basic and acidic residues; it reads GHERERDRENTHYEKKPKLDSDSEVDIRSFRQDMDL. Position 221 is a phosphoserine (Ser-221).

This is an uncharacterized protein from Saccharomyces cerevisiae (strain ATCC 204508 / S288c) (Baker's yeast).